Reading from the N-terminus, the 107-residue chain is Large ribosomal subunit protein P2 (107 aa).

Positions 63–83 (SSVPSGGSAPAAAAPSGGAAP) are enriched in low complexity. The disordered stretch occupies residues 63 to 107 (SSVPSGGSAPAAAAPSGGAAPKAEEKKKEEPKEESDDDMGFGLFD). The span at 84-93 (KAEEKKKEEP) shows a compositional bias: basic and acidic residues.

It belongs to the eukaryotic ribosomal protein P1/P2 family. P1 and P2 exist as dimers at the large ribosomal subunit. Phosphorylated.

Functionally, plays an important role in the elongation step of protein synthesis. This Caenorhabditis elegans protein is Large ribosomal subunit protein P2.